Here is a 100-residue protein sequence, read N- to C-terminus: Small ribosomal subunit protein uS14 (100 aa).

Belongs to the universal ribosomal protein uS14 family. Part of the 30S ribosomal subunit. Contacts proteins S3 and S10.

Functionally, binds 16S rRNA, required for the assembly of 30S particles and may also be responsible for determining the conformation of the 16S rRNA at the A site. This chain is Small ribosomal subunit protein uS14, found in Prochlorococcus marinus (strain AS9601).